The following is a 644-amino-acid chain: 1,4-alpha-glucan branching enzyme GlgB (644 aa).

Aspartate 309 (nucleophile) is an active-site residue. Glutamate 362 (proton donor) is an active-site residue.

Belongs to the glycosyl hydrolase 13 family. GlgB subfamily. Monomer.

It carries out the reaction Transfers a segment of a (1-&gt;4)-alpha-D-glucan chain to a primary hydroxy group in a similar glucan chain.. Its pathway is glycan biosynthesis; glycogen biosynthesis. In terms of biological role, catalyzes the formation of the alpha-1,6-glucosidic linkages in glycogen by scission of a 1,4-alpha-linked oligosaccharide from growing alpha-1,4-glucan chains and the subsequent attachment of the oligosaccharide to the alpha-1,6 position. The chain is 1,4-alpha-glucan branching enzyme GlgB from Cutibacterium acnes (strain DSM 16379 / KPA171202) (Propionibacterium acnes).